A 1224-amino-acid polypeptide reads, in one-letter code: A disintegrin and metalloproteinase with thrombospondin motifs 16 (1224 aa).

A signal peptide spans 1–24; it reads MKPRARGWRGLAALWMLLAQVAEQ. Residues 25 to 279 constitute a propeptide that is removed on maturation; it reads APACAMGPAA…EYKSCLRHKR (255 aa). A disordered region spans residues 31-53; that stretch reads GPAAAAPGSPSVPRPPPPAERPG. The span at 40 to 50 shows a compositional bias: pro residues; it reads PSVPRPPPPAE. Asparagine 156 is a glycosylation site (N-linked (GlcNAc...) asparagine). Positions 247–254 match the Cysteine switch motif; it reads HFCGRRKK. Zn(2+) is bound at residue cysteine 249. A Peptidase M12B domain is found at 290–495; that stretch reads LNVETLVVVD…AQAICLADQP (206 aa). Residue asparagine 310 is glycosylated (N-linked (GlcNAc...) asparagine). 11 cysteine pairs are disulfide-bonded: cysteine 366–cysteine 417, cysteine 392–cysteine 399, cysteine 411–cysteine 490, cysteine 450–cysteine 474, cysteine 518–cysteine 543, cysteine 529–cysteine 550, cysteine 538–cysteine 569, cysteine 563–cysteine 574, cysteine 598–cysteine 635, cysteine 602–cysteine 640, and cysteine 613–cysteine 625. Histidine 433 contacts Zn(2+). The active site involves glutamate 434. The Zn(2+) site is built by histidine 437 and histidine 443. A Disintegrin domain is found at 496–585; it reads KPVKEYKYPE…KYGDEGPKPT (90 aa). Residues 586–641 enclose the TSP type-1 1 domain; the sequence is HGHWSDWSSWSPCSRTCGGGVSHRSRLCTNPKPSHGGKFCEGSTRTLKLCNSQKCP. 5 N-linked (GlcNAc...) asparagine glycosylation sites follow: asparagine 741, asparagine 780, asparagine 835, asparagine 905, and asparagine 935. The segment at 747–873 is spacer; the sequence is IHRGLYTKHH…KQPPAQPSYT (127 aa). 5 consecutive TSP type-1 domains span residues 874 to 922, 927 to 987, 988 to 1048, 1051 to 1115, and 1127 to 1181; these read WAIV…LVPC, CPPS…QSCP, PAWS…QRCH, KKLQ…LPCP, and RGSW…HFCP. 3 disulfides stabilise this stretch: cysteine 939-cysteine 981, cysteine 943-cysteine 986, and cysteine 954-cysteine 970. The region spanning 1186–1223 is the PLAC domain; the sequence is KDAFCKDYFHWCYLVPQHGMCSHKFYGKQCCKTCSKSN.

Requires Zn(2+) as cofactor. Post-translationally, the precursor is cleaved by a furin endopeptidase. Glycosylated. Can be O-fucosylated by POFUT2 on a serine or a threonine residue found within the consensus sequence C1-X(2)-(S/T)-C2-G of the TSP type-1 repeat domains where C1 and C2 are the first and second cysteine residue of the repeat, respectively. Fucosylated repeats can then be further glycosylated by the addition of a beta-1,3-glucose residue by the glucosyltransferase, B3GALTL. Fucosylation mediates the efficient secretion of ADAMTS family members. Can also be C-glycosylated with one or two mannose molecules on tryptophan residues within the consensus sequence W-X-X-W of the TPRs, and N-glycosylated. These other glycosylations can also facilitate secretion. As to expression, expressed in fetal lung and kidney and in adult prostate and ovary.

The protein resides in the secreted. It is found in the extracellular space. The protein localises to the extracellular matrix. The chain is A disintegrin and metalloproteinase with thrombospondin motifs 16 (ADAMTS16) from Homo sapiens (Human).